The primary structure comprises 82 residues: UPF0154 protein SPD_1662 (82 aa).

A helical transmembrane segment spans residues 5 to 25 (LAIVLIVLAFLGGALGGMYLV).

The protein belongs to the UPF0154 family.

It is found in the cell membrane. This chain is UPF0154 protein SPD_1662, found in Streptococcus pneumoniae serotype 2 (strain D39 / NCTC 7466).